An 88-amino-acid chain; its full sequence is SPbeta prophage-derived protein BhlB (88 aa).

2 helical membrane-spanning segments follow: residues 15-35 (LLAI…AFII) and 45-65 (DCLY…AAWF).

Belongs to the SPP1 holin family.

The protein localises to the cell membrane. May be involved in the secretion of the autolysin BlyA. The protein is SPbeta prophage-derived protein BhlB (bhlB) of Bacillus subtilis (strain 168).